Reading from the N-terminus, the 407-residue chain is MMEKHFVGSEIGQLRSVMLHRPNLSLKRLTPSNCQELLFDDVLSVERAGEEHDIFANTLRQQGIEVLLLTDLLTQTLDVADAKAWLLDTQISDYRLGPTFAADIRAWLADMPHRELARHLSGGLTYGEIPASIKNMVVDTHDINDFIMKPLPNHLFTRDTSCWIYNGVSINPMAKPARQRETNNLRAIYRWHPQFAGGDFIKYFGDEDINYDHATLEGGDVLVIGRGAVLIGMSERTTPQGVEFLAQALFKHRQAERVIAVELPKHRSCMHLDTVMTHIDIDTFSVYPEVVRPDVQCWTLTPDGRGGLKRTQESTLVHALEKALGIDQVRLITTGGDAFEAEREQWNDANNVLTLRPGVVVGYERNIWTNEKYDKAGITVLPIPGDELGRGRGGARCMSCPLERDGI.

Cysteine 397 functions as the Amidino-cysteine intermediate in the catalytic mechanism.

This sequence belongs to the arginine deiminase family.

Its subcellular location is the cytoplasm. It carries out the reaction L-arginine + H2O = L-citrulline + NH4(+). It participates in amino-acid degradation; L-arginine degradation via ADI pathway; carbamoyl phosphate from L-arginine: step 1/2. This is Arginine deiminase from Salmonella choleraesuis (strain SC-B67).